An 823-amino-acid chain; its full sequence is DNA topoisomerase 4 subunit A (823 aa).

The 467-residue stretch at 30–496 folds into the Topo IIA-type catalytic domain; the sequence is LPDIRDGLKP…KAIEIDTASL (467 aa). Residue Tyr118 is the O-(5'-phospho-DNA)-tyrosine intermediate of the active site.

Belongs to the type II topoisomerase GyrA/ParC subunit family. ParC type 2 subfamily. As to quaternary structure, heterotetramer composed of ParC and ParE.

The protein localises to the cell membrane. It carries out the reaction ATP-dependent breakage, passage and rejoining of double-stranded DNA.. Its activity is regulated as follows. Inhibited by quinolones, such as levofloxacin. Topoisomerase IV is essential for chromosome segregation. It relaxes supercoiled DNA. Performs the decatenation events required during the replication of a circular DNA molecule. In Streptococcus pneumoniae serotype 4 (strain ATCC BAA-334 / TIGR4), this protein is DNA topoisomerase 4 subunit A.